We begin with the raw amino-acid sequence, 2493 residues long: Polyprotein P1234 (2493 aa).

One can recognise an Alphavirus-like MT domain in the interval 28–259 (EAKQVTDNDH…EKRDLLRSWH (232 aa)). Residues 244 to 263 (GSTIYHEKRDLLRSWHLPSV) form a nsP1 membrane-binding region. The S-palmitoyl cysteine; by host moiety is linked to residue cysteine 419. One can recognise a (+)RNA virus helicase ATP-binding domain in the interval 690 to 841 (ELVDPPFHEF…HEICTQVFHK (152 aa)). Residue 721 to 728 (GVPGSGKS) coordinates a ribonucleoside 5'-triphosphate. Positions 842–990 (SISRRCTKSV…IEEWQAEHDA (149 aa)) constitute a (+)RNA virus helicase C-terminal domain. In terms of domain architecture, Peptidase C9 spans 1003–1322 (DVFQNKANVC…STLTNIYTGS (320 aa)). A nucleolus localization signal region spans residues 1004-1023 (VFQNKANVCWAKALVPVLKT). The active-site For cysteine protease nsP2 activity is the cysteine 1012. A Nuclear export signal motif is present at residues 1056-1065 (VRFFGLDLDS). Histidine 1081 acts as the For cysteine protease nsP2 activity in catalysis. The Nuclear localization signal motif lies at 1179–1183 (PGKKV). Positions 1330-1489 (APSYHVVRGD…TLKEAVARRE (160 aa)) constitute a Macro domain. ADP-D-ribose is bound by residues aspartate 1339, asparagine 1353, glycine 1361, glycine 1441, isoleucine 1442, and phenylalanine 1443. The Zn(2+) site is built by cysteine 1596, cysteine 1598, cysteine 1621, and cysteine 1639. 2 disordered regions span residues 1664–1684 (PVEETPESPAENQSTEGTPEQ) and 1790–1826 (APRTVFRNPPHPAPRTRTPPLAHSRASSRTSLVSTPP). A compositionally biased stretch (polar residues) spans 1814 to 1823 (RASSRTSLVS). 2 consecutive repeat copies span residues 1818–1839 (RTSLVSTPPGVNRVITREELEA) and 1852–1873 (RTSLVSNPPGVNRVITREEFEA). The 2 X 21 AA approximate repeats, binding to host FXR family members stretch occupies residues 1818 to 1873 (RTSLVSTPPGVNRVITREELEALTPSRAPSRSASRTSLVSNPPGVNRVITREEFEA). The 116-residue stretch at 2250–2365 (DCVLETDIAS…KGVKSDKLMA (116 aa)) folds into the RdRp catalytic domain.

As to quaternary structure, interacts with non-structural protein 3. Interacts with RNA-directed RNA polymerase nsP4. Interacts with protease nsP2. interacts with itself. In terms of assembly, interacts with mRNA-capping enzyme nsP1. Interacts with host DDX1. Interacts with host DDX3. Interacts (via C-terminus) with host FXR1; this interaction inhibits the formation of host stress granules on viral mRNAs and the nsp3-FXR1 complexes bind viral RNAs and probably orchestrate the assembly of viral replication complexes. Interacts (via C-terminus) with host FXR2; this interaction inhibits the formation of host stress granules on viral mRNAs and the nsp3-FXR2 complexes bind viral RNAs and probably orchestrate the assembly of viral replication complexes. Interacts (via C-terminus) with host FMR1; this interaction inhibits the formation of host stress granules on viral mRNAs and the nsp3-FMR1 complexes bind viral RNAs and probably orchestrate the assembly of viral replication complexes. Interacts with mRNA-capping enzyme nsP1. Interacts with protease nsP2. interacts with itself. As to quaternary structure, interacts with RNA-directed RNA polymerase nsP4. Interacts with mRNA-capping enzyme nsP1. Interacts with KPNA1/karyopherin-alpha1; this interaction probably allows the active transport of protease nsP2 into the host nucleus. Mg(2+) serves as cofactor. Mn(2+) is required as a cofactor. Specific enzymatic cleavages in vivo yield mature proteins. The processing of the polyprotein is temporally regulated. In early stages (1.7 hpi), P1234 is first cleaved in trans through its nsP2 protease activity, releasing P123' and nsP4, which associate to form the early replication complex. At the same time, P1234 is also cut at the nsP1/nsP2 site early in infection but with lower efficiency. After replication of the viral minus-strand RNAs (4 hpi), the polyproteins are cut at the nsP1/nsP2 and nsP2/nsP3 sites very efficiently, preventing accumulation of P123' and P1234 and allowing the formation of the late replication complex. NsP3'/nsP4 site is not cleaved anymore and P34 is produced rather than nsP4. In terms of processing, specific enzymatic cleavages in vivo yield mature proteins. The processing of the polyprotein is temporally regulated. In early stages (1.7 hpi), P123 is cleaved at the nsP1/nsP2 site with low efficiency. After replication of the viral minus-strand RNAs (4 hpi), the polyproteins are cut at the nsP1/nsP2 and nsP2/nsP3 sites very efficiently, preventing accumulation of P123 and allowing the formation of the late replication complex. Post-translationally, specific enzymatic cleavages in vivo yield mature proteins. The processing of the polyprotein is temporally regulated. In early stages (1.7 hpi), P123' is cleaved at the nsP1/nsP2 site with low efficiency. After replication of the viral minus-strand RNAs (4 hpi), the polyproteins are cut at the nsP1/nsP2 and nsP2/nsP3 sites very efficiently, preventing accumulation of P123' and allowing the formation of the late replication complex. Palmitoylated by host palmitoyltransferases ZDHHC2 and ZDHHC19. In terms of processing, phosphorylated by host on serines and threonines. Post-translationally, ubiquitinated; targets the protein for rapid degradation via the ubiquitin system. Nsp4 is present in extremely low quantities due to low frequency of translation through the amber stop-codon and the degradation by the ubiquitin pathway.

Its subcellular location is the host cytoplasmic vesicle membrane. It is found in the host cell membrane. The protein localises to the host cell projection. The protein resides in the host filopodium. It localises to the host nucleus. Its subcellular location is the host cytoplasm. It carries out the reaction GTP + S-adenosyl-L-methionine = N(7)-methyl-GTP + S-adenosyl-L-homocysteine. It catalyses the reaction N(7)-methyl-GTP + L-histidyl-[protein] = N(tele)-(N(7)-methylguanosine 5'-phospho)-L-histidyl-[protein] + diphosphate. The enzyme catalyses N(tele)-(N(7)-methylguanosine 5'-phospho)-L-histidyl-[protein] + a 5'-end diphospho-(purine-ribonucleoside) in mRNA + H(+) = a 5'-end (N(7)-methyl 5'-triphosphoguanosine)-(purine-ribonucleoside) in mRNA + L-histidyl-[protein]. The catalysed reaction is a 5'-end triphospho-ribonucleoside in mRNA + H2O = a 5'-end diphospho-ribonucleoside in mRNA + phosphate + H(+). It carries out the reaction a ribonucleoside 5'-triphosphate + H2O = a ribonucleoside 5'-diphosphate + phosphate + H(+). It catalyses the reaction ATP + H2O = ADP + phosphate + H(+). The enzyme catalyses RNA(n) + a ribonucleoside 5'-triphosphate = RNA(n+1) + diphosphate. The catalysed reaction is 4-O-(ADP-D-ribosyl)-L-aspartyl-[protein] + H2O = L-aspartyl-[protein] + ADP-D-ribose + H(+). It carries out the reaction 5-O-(ADP-D-ribosyl)-L-glutamyl-[protein] + H2O = L-glutamyl-[protein] + ADP-D-ribose + H(+). It catalyses the reaction RNA(n) + ATP = RNA(n)-3'-adenine ribonucleotide + diphosphate. The enzyme catalyses ADP-alpha-D-ribose 1''-phosphate + H2O = ADP-D-ribose + phosphate. Its activity is regulated as follows. Inhibited by sinefungin. In terms of biological role, inactive precursor of the viral replicase, which is activated by cleavages carried out by the viral protease nsP2. The early replication complex formed by the polyprotein P123 and nsP4 synthesizes the minus-strand RNAs (antigenome). Polyprotein P123 is a short-lived polyprotein that accumulates during early stage of infection. As soon P123 is cleaved into mature proteins, the plus-strand RNAs synthesis begins. Functionally, the early replication complex formed by the polyprotein P123' and nsP4 synthesizes minus-strand RNAs (antigenome). Polyprotein P123' is a short-lived polyprotein that accumulates during early stage of infection. As soon P123' is cleaved into mature proteins, the plus-strand RNAs synthesis begins. Its function is as follows. Cytoplasmic capping enzyme that catalyzes two virus-specific reactions: methyltransferase and nsP1 guanylyltransferase. mRNA-capping is necessary since all viral RNAs are synthesized in the cytoplasm, and host capping enzymes are restricted to the nucleus. The enzymatic reaction involves a covalent link between 7-methyl-GMP and nsP1, whereas eukaryotic capping enzymes form a covalent complex only with GMP. NsP1 capping consists in the following reactions: GTP is first methylated into 7-methyl-GMP and then is covalently linked to nsP1 to form the m7GMp-nsP1 complex from which 7-methyl-GMP complex is transferred to the mRNA to create the cap structure. NsP1 is also needed for the initiation of the minus-strand RNAs synthesis. Probably serves as a membrane anchor for the replication complex composed of nsP1-nsP4. Nsp1 is needed for the initiation of the minus-strand RNAs synthesis. Palmitoylated nsP1 is remodeling host cell cytoskeleton, and induces filopodium-like structure formation at the surface of the host cell. In terms of biological role, multifunctional protein whose N-terminus is part of the RNA polymerase complex and displays NTPase, RNA triphosphatase and helicase activities. NTPase and RNA triphosphatase are involved in viral RNA capping and helicase keeps a check on the dsRNA replication intermediates. The C-terminus harbors a protease that specifically cleaves the polyproteins and releases the mature proteins. Required for the shutoff of minus-strand RNAs synthesis. Inhibits host translation to ensure maximal viral gene expression and evade host immune response. Seems to be essential for minus-strand RNAs and subgenomic 26S mRNAs synthesis. Displays mono-ADP-ribosylhydrolase activity. ADP-ribosylation is a post-translational modification that controls various processes of the host cell and the virus probably needs to revert it for optimal viral replication. Binds proteins of FXR family and sequesters them into the viral RNA replication complexes thereby inhibiting the formation of host stress granules on viral mRNAs. The nsp3-FXR complexes bind viral RNAs and probably orchestrate the assembly of viral replication complexes, thanks to the ability of FXR family members to self-assemble and bind DNA. Functionally, seems to be essential for minus-strand RNAs and subgenomic 26S mRNAs synthesis. Displays mono-ADP-ribosylhydrolase activity. ADP-ribosylation is a post-translational modification that controls various processes of the host cell and the virus probably needs to revert it for optimal viral replication. Binds proteins of FXR family and sequesters them into the viral RNA replication complexes thereby inhibiting the formation of host stress granules on viral mRNAs. The nsp3'-FXR complexes bind viral RNAs and probably orchestrate the assembly of viral replication complexes, thanks to the ability of FXR family members to self-assemble and bind DNA. Its function is as follows. RNA dependent RNA polymerase. Replicates genomic and antigenomic RNA by recognizing replications specific signals. The early replication complex formed by the polyprotein P123 and nsP4 synthesizes minus-strand RNAs. The late replication complex composed of fully processed nsP1-nsP4 is responsible for the production of genomic and subgenomic plus-strand RNAs. In Bos taurus (Bovine), this protein is Polyprotein P1234.